The primary structure comprises 70 residues: Sec-independent protein translocase protein TatA (70 aa).

The chain crosses the membrane as a helical span at residues 1-21 (MFGLGGQELLLILLIILLLFG). Residues 47 to 70 (EDEFNKAMSDPPEKKEKESPSDKG) form a disordered region. Residues 57–70 (PPEKKEKESPSDKG) show a composition bias toward basic and acidic residues.

Belongs to the TatA/E family. As to quaternary structure, forms a complex with TatC.

It is found in the cell inner membrane. Its function is as follows. Part of the twin-arginine translocation (Tat) system that transports large folded proteins containing a characteristic twin-arginine motif in their signal peptide across membranes. TatA could form the protein-conducting channel of the Tat system. This chain is Sec-independent protein translocase protein TatA, found in Prosthecochloris aestuarii (strain DSM 271 / SK 413).